The sequence spans 91 residues: Putative methyltransferase YfdM (91 aa).

In Escherichia coli (strain K12), this protein is Putative methyltransferase YfdM (yfdM).